Here is a 489-residue protein sequence, read N- to C-terminus: Male-specific lethal 1-like 1 (489 aa).

Disordered regions lie at residues 126–164 (PMVS…VRKG) and 224–311 (VKKD…EDMQ). Residues 179 to 227 (LLLQLELIEQQQKHLHNKNKEIEDLKAEKEMLMARIERMEHRLQMVKKD) adopt a coiled-coil conformation. The PEHE domain occupies 347–466 (TVEVPSWRES…LKQQDFDLPW (120 aa)). An interaction with KAT8 HAT domain region spans residues 371–389 (ECLDDSVFLKRHSKLELDE). Positions 380-394 (KRHSKLELDEKRRKR) match the Bipartite nuclear localization signal motif.

The protein belongs to the msl-1 family. As to quaternary structure, component of a multisubunit histone acetyltransferase complex (MSL). Interacts (via PEHE domain) with KAT8 (via HAT domain) and MSL3 (via MRG domain); both interactions are direct.

It localises to the nucleus. It is found in the nucleoplasm. Its subcellular location is the nucleus speckle. Functionally, component of histone acetyltransferase complex. Within MSL complex, promotes ubiquitination of histone H2B. In Danio rerio (Zebrafish), this protein is Male-specific lethal 1-like 1 (msl1l1).